Consider the following 201-residue polypeptide: UPF0056 membrane protein PH0760 (201 aa).

The next 6 helical transmembrane spans lie at 8-28 (FMILYTGMFAITNPIGAVPVF), 49-69 (ITVFITLTVFALVGQWIFKFF), 73-93 (IDAFAIAGGILLFRMGMEMLS), 111-131 (VAVIPLAIPLISGPGAITTVM), 140-160 (GIVILTIIAIGLTTYGILYSG), and 181-201 (LILTSMAMQMIINGIKGAFGI).

Belongs to the UPF0056 (MarC) family.

The protein resides in the cell membrane. In Pyrococcus horikoshii (strain ATCC 700860 / DSM 12428 / JCM 9974 / NBRC 100139 / OT-3), this protein is UPF0056 membrane protein PH0760.